A 649-amino-acid chain; its full sequence is Drebrin (649 aa).

A2 is modified (N-acetylalanine). The 132-residue stretch at 3–134 (GVSFSGHRLE…DAGAIGQRLS (132 aa)) folds into the ADF-H domain. A phosphoserine mark is found at S141 and S142. Composition is skewed to basic and acidic residues over residues 208-236 (QERM…EEHR) and 288-298 (DNPREFFKQQE). Disordered regions lie at residues 208 to 420 (QERM…PAED), 477 to 502 (DLWP…PSGT), and 538 to 620 (EPPA…PPPV). T331 and T335 each carry phosphothreonine. Polar residues predominate over residues 334-348 (PTRSPSDSSTASTPV). Phosphoserine is present on residues S337, S339, and S345. The residue at position 346 (T346) is a Phosphothreonine. Pro residues predominate over residues 363 to 374 (QPPPLPPPPPPA). S416 bears the Phosphoserine mark. Phosphothreonine is present on T497. Residues 582–594 (NGETTQKEGTQAS) are compositionally biased toward polar residues. A Phosphoserine modification is found at S601.

Interacts with RUFY3. Interacts with CXCR4; this interaction is enhanced by antigenic stimulation. Interacts (via ADF-H domain) with ZMYND8 (via N-terminus); the interaction leads to sequestering of ZMYND8 in the cytoplasm. As to expression, expressed in the brain, with expression in the molecular layer of the dentate gyrus, stratum pyramidale, and stratum radiatum of the hippocampus (at protein level). Also expressed in the terminal varicosities distributed along dendritic trees of pyramidal cells in CA4 and CA3 of the hippocampus (at protein level). Expressed in pyramidal cells in CA2, CA1 and the subiculum of the hippocampus (at protein level). Expressed in peripheral blood lymphocytes, including T-cells (at protein level). Expressed in the brain. Expressed in the heart, placenta, lung, skeletal muscle, kidney, pancreas, skin fibroblasts, gingival fibroblasts and bone-derived cells.

The protein resides in the cytoplasm. Its subcellular location is the cell projection. The protein localises to the dendrite. It localises to the cell cortex. It is found in the cell junction. The protein resides in the growth cone. Actin cytoskeleton-organizing protein that plays a role in the formation of cell projections. Required for actin polymerization at immunological synapses (IS) and for the recruitment of the chemokine receptor CXCR4 to IS. Plays a role in dendritic spine morphogenesis and organization, including the localization of the dopamine receptor DRD1 to the dendritic spines. Involved in memory-related synaptic plasticity in the hippocampus. In Homo sapiens (Human), this protein is Drebrin (DBN1).